The following is a 552-amino-acid chain: Low-affinity Fe(2+) transport protein (552 aa).

Over 1 to 97 the chain is Extracellular; sequence MGKIAEFLGN…DFLVRVAGSQ (97 aa). K39 participates in a covalent cross-link: Glycyl lysine isopeptide (Lys-Gly) (interchain with G-Cter in ubiquitin). Residues S48 and S50 each carry the phosphoserine modification. The chain crosses the membrane as a helical span at residues 98 to 118; that stretch reads AVFFIVWIILIIWVVIGIVYN. Topologically, residues 119 to 225 are cytoplasmic; sequence APFNWQVVMQ…SNVASRYMGS (107 aa). A helical transmembrane segment spans residues 226–246; that stretch reads IAAMVIFWIGIFVWIGCGAIP. At 247-271 the chain is on the extracellular side; the sequence is KDAGNTPPYTGETTGSNPRLKKFSD. Residues 272-292 form a helical membrane-spanning segment; it reads AWQMYINTAVAVSLLICTTFL. Over 293 to 354 the chain is Cytoplasmic; it reads QNIRARHDYF…GRKMIDWYAD (62 aa). The helical transmembrane segment at 355–375 threads the bilayer; the sequence is IIGTGIGVLIGVAVFATWIGI. Topologically, residues 376–383 are extracellular; that stretch reads GSPMKWDD. A helical membrane pass occupies residues 384-404; it reads NWWLIIGTYTGLIGFLDGFVL. Residues 405-465 are Cytoplasmic-facing; the sequence is REVYFRIVQH…SQYINRICST (61 aa). Residues 466–486 form a helical membrane-spanning segment; that stretch reads PWSVLVSVIIIIGLICIASGL. The Extracellular portion of the chain corresponds to 487-493; the sequence is RWSTTGQ. A helical transmembrane segment spans residues 494–514; sequence LIANTPTMIIEEFFLLVLLQA. The Cytoplasmic segment spans residues 515 to 552; that stretch reads HNWADRQRRVEVTALYARRRILLSYVEKRFPEVMMLEK.

Belongs to the FET4 family.

It localises to the membrane. Required for Fe(2+) ion low affinity uptake. The sequence is that of Low-affinity Fe(2+) transport protein (FET4) from Saccharomyces cerevisiae (strain ATCC 204508 / S288c) (Baker's yeast).